The chain runs to 108 residues: Insulin-1 (108 aa).

A signal peptide spans Met-1–Ala-24. 3 disulfide bridges follow: Cys-31/Cys-94, Cys-43/Cys-107, and Cys-93/Cys-98. The propeptide at Glu-57–Gln-85 is c peptide.

It belongs to the insulin family. In terms of assembly, heterodimer of a B chain and an A chain linked by two disulfide bonds.

It is found in the secreted. Its function is as follows. Insulin decreases blood glucose concentration. It increases cell permeability to monosaccharides, amino acids and fatty acids. It accelerates glycolysis, the pentose phosphate cycle, and glycogen synthesis in liver. The sequence is that of Insulin-1 (Ins1) from Mus musculus (Mouse).